The chain runs to 372 residues: Probable peptidoglycan glycosyltransferase FtsW (372 aa).

Topologically, residues 1 to 12 (MQKKSTISWSYD) are cytoplasmic. A helical transmembrane segment spans residues 13–33 (AWIVICTLSLLALGLLMVASA). Residues 34–45 (SMVISDRQFGYP) lie on the Periplasmic side of the membrane. Residues 46–66 (FHYFIRHLIYLSLGLTLAWVA) form a helical membrane-spanning segment. At 67–77 (SRVPIKVWKTY) the chain is on the cytoplasmic side. The helical transmembrane segment at 78-98 (SGYLFLVGFLLLILVLAPVIG) threads the bilayer. Residues 99–109 (KTVNGSRRWIQ) lie on the Periplasmic side of the membrane. The chain crosses the membrane as a helical span at residues 110 to 130 (LGFISLQVSEVVKFVTILYLA). The Cytoplasmic segment spans residues 131–142 (SFLQRYQSEVQK). A helical membrane pass occupies residues 143–163 (ELKGFLKPMLLVGILSGLLLL). At 164-165 (EP) the chain is on the periplasmic side. A helical transmembrane segment spans residues 166–186 (DFGAAVVITMTCLALLFLAGV). Residue Arg-187 is a topological domain, cytoplasmic. The chain crosses the membrane as a helical span at residues 188 to 208 (LWPFCVLLVLVAGSLILLAIL). At 209-277 (SPYRLQRLTS…LFAVLAEELG (69 aa)) the chain is on the periplasmic side. A helical transmembrane segment spans residues 278-298 (LIGEILLMGLFVLLIGRIILI). Residues 299–315 (GRRAENSNQLYSAYLAY) lie on the Cytoplasmic side of the membrane. Residues 316 to 336 (GIALWLGLQVIINIGVTAGVL) traverse the membrane as a helical segment. Residues 337-342 (PTKGLT) lie on the Periplasmic side of the membrane. Residues 343–363 (LPFISYGGSSLLMNCLAIGVI) form a helical membrane-spanning segment. Topologically, residues 364-372 (LRIAYETEN) are cytoplasmic.

The protein belongs to the SEDS family. FtsW subfamily.

Its subcellular location is the cell inner membrane. The enzyme catalyses [GlcNAc-(1-&gt;4)-Mur2Ac(oyl-L-Ala-gamma-D-Glu-L-Lys-D-Ala-D-Ala)](n)-di-trans,octa-cis-undecaprenyl diphosphate + beta-D-GlcNAc-(1-&gt;4)-Mur2Ac(oyl-L-Ala-gamma-D-Glu-L-Lys-D-Ala-D-Ala)-di-trans,octa-cis-undecaprenyl diphosphate = [GlcNAc-(1-&gt;4)-Mur2Ac(oyl-L-Ala-gamma-D-Glu-L-Lys-D-Ala-D-Ala)](n+1)-di-trans,octa-cis-undecaprenyl diphosphate + di-trans,octa-cis-undecaprenyl diphosphate + H(+). The protein operates within cell wall biogenesis; peptidoglycan biosynthesis. Peptidoglycan polymerase that is essential for cell division. The chain is Probable peptidoglycan glycosyltransferase FtsW from Coxiella burnetii (strain RSA 493 / Nine Mile phase I).